The primary structure comprises 443 residues: Ribulose bisphosphate carboxylase large chain (443 aa).

N6,N6,N6-trimethyllysine is present on lysine 7. Substrate contacts are provided by asparagine 116 and threonine 166. Residue lysine 168 is the Proton acceptor of the active site. A substrate-binding site is contributed by lysine 170. The Mg(2+) site is built by lysine 194, aspartate 196, and glutamate 197. Lysine 194 is subject to N6-carboxylysine. Histidine 287 serves as the catalytic Proton acceptor. Substrate is bound by residues arginine 288, histidine 320, and serine 372.

Belongs to the RuBisCO large chain family. Type I subfamily. As to quaternary structure, heterohexadecamer of 8 large chains and 8 small chains; disulfide-linked. The disulfide link is formed within the large subunit homodimers. Mg(2+) is required as a cofactor. The disulfide bond which can form in the large chain dimeric partners within the hexadecamer appears to be associated with oxidative stress and protein turnover.

Its subcellular location is the plastid. It localises to the chloroplast. It carries out the reaction 2 (2R)-3-phosphoglycerate + 2 H(+) = D-ribulose 1,5-bisphosphate + CO2 + H2O. The catalysed reaction is D-ribulose 1,5-bisphosphate + O2 = 2-phosphoglycolate + (2R)-3-phosphoglycerate + 2 H(+). Functionally, ruBisCO catalyzes two reactions: the carboxylation of D-ribulose 1,5-bisphosphate, the primary event in carbon dioxide fixation, as well as the oxidative fragmentation of the pentose substrate in the photorespiration process. Both reactions occur simultaneously and in competition at the same active site. This Abies sachalinensis (Sakhalin fir) protein is Ribulose bisphosphate carboxylase large chain.